The following is a 689-amino-acid chain: Methionine--tRNA ligase (689 aa).

Positions 15–25 (PYANGPVHIGH) match the 'HIGH' region motif. The Zn(2+) site is built by cysteine 147, cysteine 150, cysteine 160, and cysteine 163. The 'KMSKS' region signature appears at 342-346 (KISTS). Residue threonine 345 coordinates ATP. A tRNA-binding domain is found at 588-689 (DFAKMDIRVA…AVVNAGSMIG (102 aa)).

Belongs to the class-I aminoacyl-tRNA synthetase family. MetG type 1 subfamily. Homodimer. The cofactor is Zn(2+).

Its subcellular location is the cytoplasm. The enzyme catalyses tRNA(Met) + L-methionine + ATP = L-methionyl-tRNA(Met) + AMP + diphosphate. Its function is as follows. Is required not only for elongation of protein synthesis but also for the initiation of all mRNA translation through initiator tRNA(fMet) aminoacylation. This is Methionine--tRNA ligase from Cytophaga hutchinsonii (strain ATCC 33406 / DSM 1761 / CIP 103989 / NBRC 15051 / NCIMB 9469 / D465).